Consider the following 1023-residue polypeptide: 1-phosphatidylinositol 4,5-bisphosphate phosphodiesterase beta-4 (1023 aa).

Residues 149-299 (QEMDHPLAHY…LKRKILIKKQ (151 aa)) form the PI-PLC X-box domain. Catalysis depends on residues His-164 and His-211. Residues 413–529 (LSTMINYAQP…GYLLKPDFMR (117 aa)) enclose the PI-PLC Y-box domain. Positions 532–657 (DRTFDPFSET…SLRNEGNKPL (126 aa)) constitute a C2 domain. Disordered regions lie at residues 711–742 (ADVP…SELR) and 930–958 (KISM…VREL). Polar residues-rich tracts occupy residues 729-742 (AKAN…SELR) and 933-942 (MENSKAISQD). Thr-734 bears the Phosphothreonine mark. The segment covering 943–957 (KSIKNKAERERRVRE) has biased composition (basic and acidic residues).

Ca(2+) is required as a cofactor. Post-translationally, the N-terminus is blocked. In terms of tissue distribution, preferentially expressed in the retina.

The protein localises to the cell membrane. The catalysed reaction is a 1,2-diacyl-sn-glycero-3-phospho-(1D-myo-inositol-4,5-bisphosphate) + H2O = 1D-myo-inositol 1,4,5-trisphosphate + a 1,2-diacyl-sn-glycerol + H(+). It carries out the reaction a 1,2-diacyl-sn-glycero-3-phospho-(1D-myo-inositol) + H2O = 1D-myo-inositol 1-phosphate + a 1,2-diacyl-sn-glycerol + H(+). In terms of biological role, activated phosphatidylinositol-specific phospholipase C enzymes catalyze the production of the second messenger molecules diacylglycerol (DAG) and inositol 1,4,5-trisphosphate (IP3) involved in G-protein coupled receptor signaling pathways. PLCB4 is a direct effector of the endothelin receptor signaling pathway that plays an essential role in lower jaw and middle ear structures development. The chain is 1-phosphatidylinositol 4,5-bisphosphate phosphodiesterase beta-4 (PLCB4) from Bos taurus (Bovine).